Here is a 284-residue protein sequence, read N- to C-terminus: Glutamate 5-kinase 2 (284 aa).

An ATP-binding site is contributed by Lys-26. Positions 67, 154, and 166 each coordinate substrate. ATP is bound by residues 186 to 187 and 228 to 234; these read SD and SGGMVTK.

Belongs to the glutamate 5-kinase family.

It is found in the cytoplasm. The catalysed reaction is L-glutamate + ATP = L-glutamyl 5-phosphate + ADP. The protein operates within amino-acid biosynthesis; L-proline biosynthesis; L-glutamate 5-semialdehyde from L-glutamate: step 1/2. Its function is as follows. Catalyzes the transfer of a phosphate group to glutamate to form L-glutamate 5-phosphate. This is Glutamate 5-kinase 2 from Mesorhizobium japonicum (strain LMG 29417 / CECT 9101 / MAFF 303099) (Mesorhizobium loti (strain MAFF 303099)).